The following is a 620-amino-acid chain: 1-deoxy-D-xylulose-5-phosphate synthase (620 aa).

Thiamine diphosphate contacts are provided by residues His-75 and Ala-116 to Ser-118. Asp-147 provides a ligand contact to Mg(2+). Thiamine diphosphate is bound by residues Gly-148–Ala-149, Asn-177, Tyr-284, and Glu-366. Asn-177 lines the Mg(2+) pocket.

This sequence belongs to the transketolase family. DXPS subfamily. In terms of assembly, homodimer. Mg(2+) is required as a cofactor. The cofactor is thiamine diphosphate.

It carries out the reaction D-glyceraldehyde 3-phosphate + pyruvate + H(+) = 1-deoxy-D-xylulose 5-phosphate + CO2. The protein operates within metabolic intermediate biosynthesis; 1-deoxy-D-xylulose 5-phosphate biosynthesis; 1-deoxy-D-xylulose 5-phosphate from D-glyceraldehyde 3-phosphate and pyruvate: step 1/1. Catalyzes the acyloin condensation reaction between C atoms 2 and 3 of pyruvate and glyceraldehyde 3-phosphate to yield 1-deoxy-D-xylulose-5-phosphate (DXP). The protein is 1-deoxy-D-xylulose-5-phosphate synthase of Bordetella bronchiseptica (strain ATCC BAA-588 / NCTC 13252 / RB50) (Alcaligenes bronchisepticus).